We begin with the raw amino-acid sequence, 340 residues long: Protein RecA (340 aa).

Residue 66 to 73 (GPESSGKT) coordinates ATP.

Belongs to the RecA family.

It localises to the cytoplasm. Can catalyze the hydrolysis of ATP in the presence of single-stranded DNA, the ATP-dependent uptake of single-stranded DNA by duplex DNA, and the ATP-dependent hybridization of homologous single-stranded DNAs. It interacts with LexA causing its activation and leading to its autocatalytic cleavage. In Rickettsia prowazekii (strain Madrid E), this protein is Protein RecA.